A 284-amino-acid polypeptide reads, in one-letter code: Short-chain dehydrogenase RED1 (284 aa).

Positions 11, 37, 58, 86, 151, 155, 184, and 186 each coordinate NADP(+). Y151 functions as the Proton acceptor in the catalytic mechanism. Catalysis depends on K155, which acts as the Lowers pKa of active site Tyr.

The protein belongs to the short-chain dehydrogenases/reductases (SDR) family.

It participates in polyketide biosynthesis. Its function is as follows. Short-chain dehydrogenase; part of the gene cluster that mediates the biosynthesis of pyriculol and pyriculariol, two heptaketides that induce lesion formation upon application on rice leaves but are dispensable for pathogenicity. The highly reducing polyketide synthase synthesizes the heptaketide backbone of pyriculol and pyriculariol. Pyriculol and pyriculariol contain several hydroxyl moieties and double bonds, so it can be assumed that several reduction steps occur during biosynthesis. These reactions could be executed by PKS19 itself or partly by the tailoring enzymes OXR1, OXR2, RED1, RED2 or RED3, identified within the cluster. The FAD-linked oxidoreductase OXR1 is the only tailoring enzyme for which the function has been determined yet, and is involved in the oxidation of dihydropyriculol and dihydropyriculariol into pyriculol and pyriculariol, respectively. This chain is Short-chain dehydrogenase RED1, found in Pyricularia oryzae (strain 70-15 / ATCC MYA-4617 / FGSC 8958) (Rice blast fungus).